A 127-amino-acid polypeptide reads, in one-letter code: Small ribosomal subunit protein uS13 (127 aa).

The disordered stretch occupies residues 95–127 (GLPLRGQRTKTNARTRRGKKGAAIGGKKKATKK).

This sequence belongs to the universal ribosomal protein uS13 family. As to quaternary structure, part of the 30S ribosomal subunit. Forms a loose heterodimer with protein S19. Forms two bridges to the 50S subunit in the 70S ribosome.

In terms of biological role, located at the top of the head of the 30S subunit, it contacts several helices of the 16S rRNA. In the 70S ribosome it contacts the 23S rRNA (bridge B1a) and protein L5 of the 50S subunit (bridge B1b), connecting the 2 subunits; these bridges are implicated in subunit movement. Contacts the tRNAs in the A and P-sites. The chain is Small ribosomal subunit protein uS13 from Herpetosiphon aurantiacus (strain ATCC 23779 / DSM 785 / 114-95).